Reading from the N-terminus, the 1245-residue chain is ATP-dependent helicase/deoxyribonuclease subunit B (1245 aa).

A disordered region spans residues 737–758 (WDDQNNAPTTDLPDRPNPRASE). The segment covering 748–758 (LPDRPNPRASE) has biased composition (basic and acidic residues).

The protein belongs to the helicase family. AddB/RexB type 2 subfamily. Heterodimer of AddA and RexB. The cofactor is Mg(2+).

The heterodimer acts as both an ATP-dependent DNA helicase and an ATP-dependent, dual-direction single-stranded exonuclease. Recognizes the chi site generating a DNA molecule suitable for the initiation of homologous recombination. This subunit has 5' -&gt; 3' nuclease activity but not helicase activity. In Limosilactobacillus fermentum (strain NBRC 3956 / LMG 18251) (Lactobacillus fermentum), this protein is ATP-dependent helicase/deoxyribonuclease subunit B.